Reading from the N-terminus, the 402-residue chain is Acetyl-CoA acetyltransferase (402 aa).

The Acyl-thioester intermediate role is filled by Cys90. CoA contacts are provided by Tyr185 and Lys230. Tyr185 contacts K(+). Position 250 (Ala250) interacts with K(+). Ser251 is a CoA binding site. Position 348 (Val348) interacts with K(+). Active-site proton acceptor residues include His352 and Cys382.

The protein belongs to the thiolase-like superfamily. Thiolase family. As to quaternary structure, homotetramer.

It is found in the cytoplasm. It localises to the cytosol. It carries out the reaction 2 acetyl-CoA = acetoacetyl-CoA + CoA. The protein operates within metabolic intermediate biosynthesis; (R)-mevalonate biosynthesis; (R)-mevalonate from acetyl-CoA: step 1/3. In terms of biological role, acetyl-CoA acetyltransferase; part of the first module of ergosterol biosynthesis pathway that includes the early steps of the pathway, conserved across all eukaryotes, and which results in the formation of mevalonate from acetyl-coenzyme A (acetyl-CoA). ERG10 catalyzes the formation of acetoacetyl-CoA from acetyl-CoA. The first module starts with the action of the cytosolic acetyl-CoA acetyltransferase ERG10 that catalyzes the formation of acetoacetyl-CoA. The hydroxymethylglutaryl-CoA synthase ERG13 then condenses acetyl-CoA with acetoacetyl-CoA to form HMG-CoA. The 3-hydroxy-3-methylglutaryl-coenzyme A (HMG-CoA) reductase HMG1 finally reduces HMG-CoA to produce mevalonate. This is Acetyl-CoA acetyltransferase from Candida albicans (strain SC5314 / ATCC MYA-2876) (Yeast).